We begin with the raw amino-acid sequence, 228 residues long: MAAPQDVHVRICNQEIVKFDLEVKALIQDIRDCSGPLSALTELNTKVKEKFQQLRHRIQDLEQLAKEQDKESEKQLLLQEVENHKKQMLSNQASWRKANLTCKIAIDNLEKAELLQGGDLLRQRKTTKESLAQTSSTITESLMGISRMMAQQVQQSEEAMQSLVTSSRTILDANEEFKSMSGTIQLGRKLITKYNRRELTDKLLIFLALALFLATVLYIVKKRLFPFL.

The Cytoplasmic portion of the chain corresponds to 1–199; the sequence is MAAPQDVHVR…LITKYNRREL (199 aa). A coiled-coil region spans residues 37–90; sequence LSALTELNTKVKEKFQQLRHRIQDLEQLAKEQDKESEKQLLLQEVENHKKQMLS. A helical; Anchor for type IV membrane protein membrane pass occupies residues 200–220; that stretch reads TDKLLIFLALALFLATVLYIV. At 221–228 the chain is on the lumenal side; it reads KKRLFPFL.

This sequence belongs to the SEC20 family. In terms of assembly, component of a SNARE complex consisting of STX18, USE1L, BNIP1/SEC20L and SEC22B. Interacts directly with STX18, RINT1/TIP20L and NAPA. Interacts with ZW10 through RINT1. Interacts with BCL2. Interacts with RNF186. Interacts with RNF185. Interacts with SQSTM1; increased by 'Lys-63'-linked polyubiquitination of BNIP1. (Microbial infection) Interacts with adenovirus E1B 19K protein; plays a role in the suppression of cell apoptosis by the viral protein. Post-translationally, polyubiquitinated. 'Lys-63'-linked polyubiquitination by RNF185 increases the interaction with the autophagy receptor SQSTM1. Undergoes 'Lys-29'- and 'Lys-63'-linked polyubiquitination by RNF186 that may regulate BNIP1 localization to the mitochondrion. As to expression, isoform 1 is highly expressed in heart, brain, liver skeletal muscle and pancreas. Isoform 3 is moderately expressed in placenta, lung and kidney. Isoform 4 is highly expressed in testis and small intestine.

Its subcellular location is the endoplasmic reticulum membrane. The protein localises to the mitochondrion membrane. Functionally, as part of a SNARE complex may be involved in endoplasmic reticulum membranes fusion and be required for the maintenance of endoplasmic reticulum organization. Also plays a role in apoptosis. It is for instance required for endoplasmic reticulum stress-induced apoptosis. As a substrate of RNF185 interacting with SQSTM1, might also be involved in mitochondrial autophagy. This chain is Vesicle transport protein SEC20 (BNIP1), found in Homo sapiens (Human).